The sequence spans 37 residues: Large ribosomal subunit protein bL36c (37 aa).

It belongs to the bacterial ribosomal protein bL36 family.

Its subcellular location is the plastid. The protein resides in the chloroplast. This Cycas taitungensis (Prince sago) protein is Large ribosomal subunit protein bL36c.